The following is a 132-amino-acid chain: D-ribose pyranase (132 aa).

Residue histidine 20 is the Proton donor of the active site. Residues aspartate 28, histidine 99, and tyrosine 121–asparagine 123 each bind substrate.

It belongs to the RbsD / FucU family. RbsD subfamily. In terms of assembly, homodecamer.

Its subcellular location is the cytoplasm. It carries out the reaction beta-D-ribopyranose = beta-D-ribofuranose. The protein operates within carbohydrate metabolism; D-ribose degradation; D-ribose 5-phosphate from beta-D-ribopyranose: step 1/2. In terms of biological role, catalyzes the interconversion of beta-pyran and beta-furan forms of D-ribose. The sequence is that of D-ribose pyranase from Streptococcus agalactiae serotype III (strain NEM316).